The primary structure comprises 330 residues: DNA-directed RNA polymerase subunit alpha (330 aa).

The interval M1–K235 is alpha N-terminal domain (alpha-NTD). The segment at I270–K330 is alpha C-terminal domain (alpha-CTD).

This sequence belongs to the RNA polymerase alpha chain family. In terms of assembly, in plastids the minimal PEP RNA polymerase catalytic core is composed of four subunits: alpha, beta, beta', and beta''. When a (nuclear-encoded) sigma factor is associated with the core the holoenzyme is formed, which can initiate transcription.

Its subcellular location is the plastid. The protein resides in the chloroplast. The catalysed reaction is RNA(n) + a ribonucleoside 5'-triphosphate = RNA(n+1) + diphosphate. Its function is as follows. DNA-dependent RNA polymerase catalyzes the transcription of DNA into RNA using the four ribonucleoside triphosphates as substrates. This is DNA-directed RNA polymerase subunit alpha (rpoA) from Gossypium barbadense (Sea Island cotton).